A 354-amino-acid polypeptide reads, in one-letter code: MVSSRMASGETILVTGGAGFIGSHTVVQLLKQGFHVSIIDNLYNSVIDAVHRVRLLVGPLLSSNLHFHHGDLRNIHDLDILFSKTKFDAVIHFAGLKGVGESVLNPSNYYDNNLVATINLFQVMSKFNCKKLVISSSATVYGQPDQIPCVEDSNLHAMNPYGRSKLFVEEVARDIQRAEAEWRIILLRYFNPVGAHESGQIGEDPRGLPNNLMPYIQQVAVARLPELNIYGHDYPTKDGTAIRDYIHVMDLADGHIAALRKLFTTDNIGCTAYNLGTGRGTSVLEMVAAFEKASGKKIPIKMCPRRPGDATAVYASTEKAEKELGWKAKYGVEEMCRDQWKWASNNPWGYQGKH.

Residue 11 to 42 (TILVTGGAGFIGSHTVVQLLKQGFHVSIIDNL) participates in NAD(+) binding. S137 is a substrate binding site. Catalysis depends on Y161, which acts as the Proton acceptor.

The protein belongs to the NAD(P)-dependent epimerase/dehydratase family. The cofactor is NAD(+).

The catalysed reaction is UDP-alpha-D-glucose = UDP-alpha-D-galactose. Its pathway is carbohydrate metabolism; galactose metabolism. This Cyamopsis tetragonoloba (Guar) protein is UDP-glucose 4-epimerase GEPI42.